The following is a 56-amino-acid chain: Large ribosomal subunit protein bL33A (56 aa).

The protein belongs to the bacterial ribosomal protein bL33 family.

The chain is Large ribosomal subunit protein bL33A from Sorangium cellulosum (strain So ce56) (Polyangium cellulosum (strain So ce56)).